Consider the following 366-residue polypeptide: Alanine racemase (366 aa).

The Proton acceptor; specific for D-alanine role is filled by Lys-40. Lys-40 bears the N6-(pyridoxal phosphate)lysine mark. Arg-136 contacts substrate. Tyr-263 acts as the Proton acceptor; specific for L-alanine in catalysis. Residue Met-310 coordinates substrate.

This sequence belongs to the alanine racemase family. The cofactor is pyridoxal 5'-phosphate.

It catalyses the reaction L-alanine = D-alanine. It participates in amino-acid biosynthesis; D-alanine biosynthesis; D-alanine from L-alanine: step 1/1. Catalyzes the interconversion of L-alanine and D-alanine. May also act on other amino acids. This Streptococcus pyogenes serotype M2 (strain MGAS10270) protein is Alanine racemase (alr).